We begin with the raw amino-acid sequence, 283 residues long: Pantothenate synthetase (283 aa).

31-38 (MGALHDGH) serves as a coordination point for ATP. Catalysis depends on histidine 38, which acts as the Proton donor. Glutamine 62 provides a ligand contact to (R)-pantoate. Residue glutamine 62 participates in beta-alanine binding. Position 148–151 (148–151 (GKKD)) interacts with ATP. Glutamine 154 is a binding site for (R)-pantoate. ATP contacts are provided by residues valine 177 and 185–188 (KSSR).

Belongs to the pantothenate synthetase family. As to quaternary structure, homodimer.

It is found in the cytoplasm. The enzyme catalyses (R)-pantoate + beta-alanine + ATP = (R)-pantothenate + AMP + diphosphate + H(+). The protein operates within cofactor biosynthesis; (R)-pantothenate biosynthesis; (R)-pantothenate from (R)-pantoate and beta-alanine: step 1/1. In terms of biological role, catalyzes the condensation of pantoate with beta-alanine in an ATP-dependent reaction via a pantoyl-adenylate intermediate. The sequence is that of Pantothenate synthetase from Staphylococcus aureus (strain MRSA252).